The following is a 304-amino-acid chain: Protein transport protein sec13 (304 aa).

WD repeat units lie at residues 12–51 (GHDDMIHDAVLDYYGRRLATCSSDRTIKIFEIEGESQRLV), 56–97 (GHDG…WQRI), 102–143 (LHKA…WEHN), 147–203 (AHGL…NGYK), 211–253 (GHTD…PGEW), and 259–298 (NFDAAVWRVSWSLSGNVLAASSDNNKVTLWKENLKGEWEN).

This sequence belongs to the WD repeat SEC13 family. In terms of assembly, the COPII coat is composed of at least 5 proteins: the sec23/24 complex, the sec13/31 complex, and the protein vtr-7/sar1. Component of the nuclear pore complex (NPC). NPC constitutes the exclusive means of nucleocytoplasmic transport. NPCs allow the passive diffusion of ions and small molecules and the active, nuclear transport receptor-mediated bidirectional transport of macromolecules such as proteins, RNAs, ribonucleoparticles (RNPs), and ribosomal subunits across the nuclear envelope. Due to its 8-fold rotational symmetry, all subunits are present with 8 copies or multiples thereof.

It localises to the cytoplasmic vesicle. Its subcellular location is the COPII-coated vesicle membrane. It is found in the endoplasmic reticulum membrane. The protein resides in the nucleus. The protein localises to the nuclear pore complex. In terms of biological role, component of the coat protein complex II (COPII) which promotes the formation of transport vesicles from the endoplasmic reticulum (ER). The coat has two main functions, the physical deformation of the endoplasmic reticulum membrane into vesicles and the selection of cargo molecules. It also functions as a component of the nuclear pore complex (NPC). NPC components, collectively referred to as nucleoporins (NUPs), can play the role of both NPC structural components and of docking or interaction partners for transiently associated nuclear transport factors. Nup-20/sec13 is required for efficient mRNA export from the nucleus to the cytoplasm and for correct nuclear pore biogenesis and distribution. This Neurospora crassa (strain ATCC 24698 / 74-OR23-1A / CBS 708.71 / DSM 1257 / FGSC 987) protein is Protein transport protein sec13 (nup-20).